We begin with the raw amino-acid sequence, 318 residues long: D-alanine--D-alanine ligase (318 aa).

Residues 117-315 (KQVWLSLGLS…FETLVWRVLE (199 aa)) enclose the ATP-grasp domain. 146 to 201 (ARQIGLPIIVKPANEGSSVGVSRVFDQAQLEEAVTLAARYDGALLMEQLIEGDELT) provides a ligand contact to ATP. Positions 268, 282, and 284 each coordinate Mg(2+).

It belongs to the D-alanine--D-alanine ligase family. The cofactor is Mg(2+). Mn(2+) is required as a cofactor.

The protein resides in the cytoplasm. The enzyme catalyses 2 D-alanine + ATP = D-alanyl-D-alanine + ADP + phosphate + H(+). It functions in the pathway cell wall biogenesis; peptidoglycan biosynthesis. In terms of biological role, cell wall formation. This chain is D-alanine--D-alanine ligase, found in Xanthomonas axonopodis pv. citri (strain 306).